The primary structure comprises 73 residues: UPF0235 protein LBL_1291 (73 aa).

The protein belongs to the UPF0235 family.

The protein is UPF0235 protein LBL_1291 of Leptospira borgpetersenii serovar Hardjo-bovis (strain L550).